The primary structure comprises 857 residues: RNA-directed RNA polymerase 2a (857 aa).

In terms of domain architecture, RdRp catalytic spans 511-624; the sequence is KHCLEIDLSK…FSLLPPVGDP (114 aa). Positions 780 to 789 are enriched in basic and acidic residues; it reads IERRCNDKRR. Positions 780 to 827 are disordered; that stretch reads IERRCNDKRRTPTGSYGGGEEAETKVSQTESTGTRSQKSQRESAFKSQ. The span at 804 to 816 shows a compositional bias: polar residues; it reads KVSQTESTGTRSQ.

This sequence belongs to the ssRNA positive-strand viruses RNA-directed RNA polymerase family. Interacts with replication protein 1a.

The enzyme catalyses RNA(n) + a ribonucleoside 5'-triphosphate = RNA(n+1) + diphosphate. RNA-dependent RNA polymerase which replicates the viral genome composed of 3 RNA segments, RNA1, RNA2 and RNA3. This is RNA-directed RNA polymerase 2a from Cucumber mosaic virus (strain FNY) (CMV).